Here is a 599-residue protein sequence, read N- to C-terminus: Dual specificity tyrosine-phosphorylation-regulated kinase 2 (599 aa).

Positions 1 to 55 are disordered; the sequence is MLTRKPSAAAPAAYPTGRGGDTAVRQLQASPGIGAGAPRSGVGTGPPSPIALPPL. A Phosphoserine modification is found at Ser-30. Thr-104 bears the Phosphothreonine; by ATM mark. A Nuclear localization signal motif is present at residues 187 to 189; it reads KKR. The region spanning 220-533 is the Protein kinase domain; sequence YEVLKVIGKG…PGQALRHPWL (314 aa). ATP contacts are provided by residues 226-234, Lys-249, and 299-302; these read IGKGSFGQV and FELL. Residue Asp-346 is the Proton acceptor of the active site. Position 379 is a phosphothreonine; by MAP3K10 (Thr-379). Position 380 is a phosphotyrosine; by autocatalysis (Tyr-380). Position 440 is a phosphoserine; by ATM (Ser-440). Residue Ser-447 is modified to Phosphoserine; by MAP3K10.

It belongs to the protein kinase superfamily. CMGC Ser/Thr protein kinase family. MNB/DYRK subfamily. Component of an E3 ligase complex containing DYRK2, EDD/UBR5, DDB1 and DCAF1 (EDVP complex). Interacts directly with EDD/UBR5, DDB1 and DCAF1. Interacts with SIAH2 and MDM2. Interacts with MAP3K10 and NFATC1. May also interact with CCNL2. Requires Mg(2+) as cofactor. The cofactor is Mn(2+). In terms of processing, autophosphorylates cotranslationally on the second tyrosine residue in the Tyr-X-Tyr motif in the activation loop, but once mature, does not have any protein tyrosine kinase activity. Phosphorylated at Thr-104 and Ser-440 by ATM in response to genotoxic stress. Under normal conditions, polyubiquitinated in the nucleus by MDM2, leading to its proteasomal degradation. Phosphorylation on Thr-104 and Ser-440 by ATM in response to genotoxic stress disrupts MDM2 binding and prevents MDM2-mediated ubiquitination and subsequent proteasomal degradation. Polyubiquitinated by SIAH2, leading to its proteasomal degradation. Polyubiquitinated by SIAH2 occurs under normal conditions, and is enhanced in response to hypoxia.

The protein localises to the cytoplasm. The protein resides in the nucleus. The enzyme catalyses L-seryl-[protein] + ATP = O-phospho-L-seryl-[protein] + ADP + H(+). The catalysed reaction is L-threonyl-[protein] + ATP = O-phospho-L-threonyl-[protein] + ADP + H(+). It carries out the reaction L-tyrosyl-[protein] + ATP = O-phospho-L-tyrosyl-[protein] + ADP + H(+). Activated by autophosphorylation on the second tyrosine residue in the Tyr-X-Tyr motif in the activation loop. Functionally, serine/threonine-protein kinase involved in the regulation of the mitotic cell cycle, cell proliferation, apoptosis, organization of the cytoskeleton and neurite outgrowth. Functions in part via its role in ubiquitin-dependent proteasomal protein degradation. Functions downstream of ATM and phosphorylates p53/TP53 at 'Ser-46', and thereby contributes to the induction of apoptosis in response to DNA damage. Phosphorylates NFATC1, and thereby inhibits its accumulation in the nucleus and its transcription factor activity. Phosphorylates EIF2B5 at 'Ser-544', enabling its subsequent phosphorylation and inhibition by GSK3B. Likewise, phosphorylation of NFATC1, CRMP2/DPYSL2 and CRMP4/DPYSL3 promotes their subsequent phosphorylation by GSK3B. May play a general role in the priming of GSK3 substrates. Inactivates GYS1 by phosphorylation at 'Ser-641', and potentially also a second phosphorylation site, thus regulating glycogen synthesis. Mediates EDVP E3 ligase complex formation and is required for the phosphorylation and subsequent degradation of KATNA1. Phosphorylates TERT at 'Ser-457', promoting TERT ubiquitination by the EDVP complex. Phosphorylates SIAH2, and thereby increases its ubiquitin ligase activity. Promotes the proteasomal degradation of MYC and JUN, and thereby regulates progress through the mitotic cell cycle and cell proliferation. Promotes proteasomal degradation of GLI2 and GLI3, and thereby plays a role in smoothened and sonic hedgehog signaling. Phosphorylates CRMP2/DPYSL2, CRMP4/DPYSL3, DCX, EIF2B5, EIF4EBP1, GLI2, GLI3, GYS1, JUN, MDM2, MYC, NFATC1, p53/TP53, TAU/MAPT and KATNA1. Can phosphorylate histone H1, histone H3 and histone H2B (in vitro). Can phosphorylate CARHSP1 (in vitro). Plays a role in cytoskeleton organization and neurite outgrowth via its phosphorylation of DCX. This is Dual specificity tyrosine-phosphorylation-regulated kinase 2 from Mus musculus (Mouse).